The following is a 148-amino-acid chain: 6,7-dimethyl-8-ribityllumazine synthase (148 aa).

Residues Phe-13, 44 to 46 (ALE), and 73 to 75 (MVI) each bind 5-amino-6-(D-ribitylamino)uracil. 78–79 (ET) contributes to the (2S)-2-hydroxy-3-oxobutyl phosphate binding site. His-81 acts as the Proton donor in catalysis. Asn-106 lines the 5-amino-6-(D-ribitylamino)uracil pocket. Position 120 (Arg-120) interacts with (2S)-2-hydroxy-3-oxobutyl phosphate.

Belongs to the DMRL synthase family.

The enzyme catalyses (2S)-2-hydroxy-3-oxobutyl phosphate + 5-amino-6-(D-ribitylamino)uracil = 6,7-dimethyl-8-(1-D-ribityl)lumazine + phosphate + 2 H2O + H(+). It participates in cofactor biosynthesis; riboflavin biosynthesis; riboflavin from 2-hydroxy-3-oxobutyl phosphate and 5-amino-6-(D-ribitylamino)uracil: step 1/2. Catalyzes the formation of 6,7-dimethyl-8-ribityllumazine by condensation of 5-amino-6-(D-ribitylamino)uracil with 3,4-dihydroxy-2-butanone 4-phosphate. This is the penultimate step in the biosynthesis of riboflavin. The protein is 6,7-dimethyl-8-ribityllumazine synthase of Agrobacterium fabrum (strain C58 / ATCC 33970) (Agrobacterium tumefaciens (strain C58)).